The chain runs to 429 residues: Histidine--tRNA ligase (429 aa).

This sequence belongs to the class-II aminoacyl-tRNA synthetase family. Homodimer.

It is found in the cytoplasm. It carries out the reaction tRNA(His) + L-histidine + ATP = L-histidyl-tRNA(His) + AMP + diphosphate + H(+). The protein is Histidine--tRNA ligase of Streptococcus pneumoniae (strain Hungary19A-6).